The primary structure comprises 358 residues: Plastoglobulin-1, chloroplastic (358 aa).

The N-terminal 47 residues, 1–47 (MALLSSTLRAPLVFSKNPKPVSLSSLHSRIYLSPRSPRFPSLRFISA), are a transit peptide targeting the chloroplast. Residues 48 to 114 (AGDTGDAEKP…NDAGNGTPTF (67 aa)) form a disordered region.

The protein belongs to the PAP/fibrillin family.

The protein localises to the plastid. It is found in the chloroplast. Functionally, may form together with other plastoglobulins a coat on the surface of the lipoprotein particle. The coat may contain receptors for attachment to the thylakoid membrane as well as regulatory proteins that may function in the transfer of lipids to and from the thylakoid membranes. The sequence is that of Plastoglobulin-1, chloroplastic (PG1) from Pisum sativum (Garden pea).